The sequence spans 128 residues: Protein Wnt-8 (128 aa).

Ser-1 carries O-palmitoleoyl serine lipidation. Intrachain disulfides connect Cys-69–Cys-109 and Cys-85–Cys-102. N-linked (GlcNAc...) asparagine glycosylation is present at Asn-72.

It belongs to the Wnt family. In terms of processing, palmitoleoylation is required for efficient binding to frizzled receptors. Depalmitoleoylation leads to Wnt signaling pathway inhibition. Post-translationally, proteolytic processing by tiki1 and tiki2 promotes oxidation and formation of large disulfide-bond oligomers, leading to inactivation of wnt8.

The protein resides in the secreted. It localises to the extracellular space. The protein localises to the extracellular matrix. Functionally, ligand for members of the frizzled family of seven transmembrane receptors. Probable developmental protein. May be a signaling molecule which affects the development of discrete regions of tissues. Is likely to signal over only few cell diameters. In Evasterias troschelii (Mottled sea star), this protein is Protein Wnt-8 (WNT-8).